We begin with the raw amino-acid sequence, 157 residues long: Probable succinate transporter subunit YjjB (157 aa).

A run of 4 helical transmembrane segments spans residues 8–28 (FALAQDMILAAIPAVGFAMVF), 57–77 (LNIEWSTFMASMLVGTIGIQW), 87–107 (VFTVAAVIPMFPGISAYTAMI), and 129–149 (FLTASSIVGALSIGLSIPGLW).

This sequence belongs to the ThrE exporter (TC 2.A.79) family. As to quaternary structure, the transporter is composed of YjjB and YjjP.

The protein resides in the cell inner membrane. In terms of biological role, involved in succinate export with YjjP. Both proteins are required for export. This chain is Probable succinate transporter subunit YjjB, found in Shigella boydii serotype 4 (strain Sb227).